The sequence spans 1354 residues: Eukaryotic translation initiation factor 3 subunit A (1354 aa).

An N6-acetyllysine modification is found at lysine 68. Residues 82–120 (NIKSLEDVVRAYLKLAEEKTEAAKEESQQMVLDIEDLDN) are a coiled coil. Positions 315-498 (MQRMSTRVLL…RTLSFGSDLN (184 aa)) constitute a PCI domain. Serine 492 and serine 584 each carry phosphoserine. The interval 664 to 835 (LDPDFIMAKQ…REERERAERA (172 aa)) is interaction with EIF3B. 3 disordered regions span residues 809 to 844 (EKEE…LREY), 866 to 1249 (EERE…RDRD), and 1262 to 1354 (DLRD…TVRR). Composition is skewed to basic and acidic residues over residues 866-1136 (EERE…DDAR), 1148-1249 (GWRE…RDRD), 1262-1302 (DLRD…DPPR), and 1310-1343 (SRER…TKNE). Serine 895 carries the post-translational modification Phosphoserine. The 1; truncated repeat unit spans residues 924 to 931 (DDERPHRR). The segment at 924–1143 (DDERPHRRDE…DARPGPWRPF (220 aa)) is 22 X 10 AA approximate tandem repeats of [DA]-[DE]-[ED]-R-[PLIGFSV]-[RPS]-[RW]-[RL]-[GNIHT]-[DGLPTAM]. Repeat unit 2 spans residues 932 to 941 (DEDRLRRLGG). The stretch at 942–951 (DDEERESSLR) is one 3; approximate repeat. A Phosphoserine modification is found at serine 949. 18 repeat units span residues 953-962 (DDDRIPRRGL), 963-972 (DDDRGPRRGP), 973-982 (DEDRFSRRGT), 983-992 (DDDRPSWRNA), 993-1002 (DDDRPPRRIG), 1003-1012 (DDDRGSWRHT), 1013-1022 (DDDRPPRRGL), 1023-1032 (DDDRPPRRGL), 1033-1042 (DDERGSWRTA), 1043-1052 (EEDRGPRRGM), 1053-1062 (DDDRGPRRGG), 1064-1073 (DDERSSWRNA), 1074-1083 (DDDRGPRRGM), 1084-1093 (DDDRGPRRGL), 1094-1103 (DDDRGPWRNA), 1104-1113 (AEDRISRRGA), 1114-1123 (DDDRGPWRNM), and 1124-1133 (DDDRVPRRGD). Position 1038 is a phosphoserine (serine 1038). The stretch at 1134-1143 (DARPGPWRPF) is one 22; approximate repeat. Serine 1159 and serine 1233 each carry phosphoserine. Phosphoserine occurs at positions 1310 and 1336.

Belongs to the eIF-3 subunit A family. As to quaternary structure, component of the eukaryotic translation initiation factor 3 (eIF-3) complex, which is composed of 13 subunits: EIF3A, EIF3B, EIF3C, EIF3D, EIF3E, EIF3F, EIF3G, EIF3H, EIF3I, EIF3J, EIF3K, EIF3L and EIF3M. The eIF-3 complex appears to include 3 stable modules: module A is composed of EIF3A, EIF3B, EIF3G and EIF3I; module B is composed of EIF3F, EIF3H, and EIF3M; and module C is composed of EIF3C, EIF3D, EIF3E, EIF3L and EIF3K. EIF3C of module C binds EIF3B of module A and EIF3H of module B, thereby linking the three modules. EIF3J is a labile subunit that binds to the eIF-3 complex via EIF3B. The eIF-3 complex interacts with RPS6KB1 under conditions of nutrient depletion. Mitogenic stimulation leads to binding and activation of a complex composed of MTOR and RPTOR, leading to phosphorylation and release of RPS6KB1 and binding of EIF4B to eIF-3. Interacts with EIF4G1. Also interacts with KRT7 and PIWIL2. Post-translationally, phosphorylated. Phosphorylation is enhanced upon serum stimulation.

It is found in the cytoplasm. Functionally, RNA-binding component of the eukaryotic translation initiation factor 3 (eIF-3) complex, which is required for several steps in the initiation of protein synthesis. The eIF-3 complex associates with the 40S ribosome and facilitates the recruitment of eIF-1, eIF-1A, eIF-2:GTP:methionyl-tRNAi and eIF-5 to form the 43S pre-initiation complex (43S PIC). The eIF-3 complex stimulates mRNA recruitment to the 43S PIC and scanning of the mRNA for AUG recognition. The eIF-3 complex is also required for disassembly and recycling of post-termination ribosomal complexes and subsequently prevents premature joining of the 40S and 60S ribosomal subunits prior to initiation. The eIF-3 complex specifically targets and initiates translation of a subset of mRNAs involved in cell proliferation, including cell cycling, differentiation and apoptosis, and uses different modes of RNA stem-loop binding to exert either translational activation or repression. The polypeptide is Eukaryotic translation initiation factor 3 subunit A (Eif3a) (Rattus norvegicus (Rat)).